We begin with the raw amino-acid sequence, 485 residues long: Glutamyl-tRNA(Gln) amidotransferase subunit A (485 aa).

Active-site charge relay system residues include Lys-78 and Ser-153. The Acyl-ester intermediate role is filled by Ser-177.

The protein belongs to the amidase family. GatA subfamily. Heterotrimer of A, B and C subunits.

The enzyme catalyses L-glutamyl-tRNA(Gln) + L-glutamine + ATP + H2O = L-glutaminyl-tRNA(Gln) + L-glutamate + ADP + phosphate + H(+). Its function is as follows. Allows the formation of correctly charged Gln-tRNA(Gln) through the transamidation of misacylated Glu-tRNA(Gln) in organisms which lack glutaminyl-tRNA synthetase. The reaction takes place in the presence of glutamine and ATP through an activated gamma-phospho-Glu-tRNA(Gln). The chain is Glutamyl-tRNA(Gln) amidotransferase subunit A from Bacillus cereus (strain ZK / E33L).